An 89-amino-acid chain; its full sequence is Small ribosomal subunit protein uS15 (89 aa).

Belongs to the universal ribosomal protein uS15 family. Part of the 30S ribosomal subunit. Forms a bridge to the 50S subunit in the 70S ribosome, contacting the 23S rRNA.

In terms of biological role, one of the primary rRNA binding proteins, it binds directly to 16S rRNA where it helps nucleate assembly of the platform of the 30S subunit by binding and bridging several RNA helices of the 16S rRNA. Its function is as follows. Forms an intersubunit bridge (bridge B4) with the 23S rRNA of the 50S subunit in the ribosome. The chain is Small ribosomal subunit protein uS15 from Escherichia coli O139:H28 (strain E24377A / ETEC).